A 313-amino-acid chain; its full sequence is Testis-expressed protein 264 (313 aa).

The Lumenal portion of the chain corresponds to M1 to L6. Residues L7 to L31 form a helical; Signal-anchor for type III membrane protein membrane-spanning segment. The Cytoplasmic portion of the chain corresponds to A32–E313. The tract at residues P193 to E313 is disordered. Residues D219 to A247 are compositionally biased toward polar residues. Phosphoserine occurs at positions 239 and 244. Residues G251–Y263 show a composition bias toward basic and acidic residues. The segment covering S264 to F273 has biased composition (low complexity). The short motif at F273–L276 is the LIR motif element.

As to quaternary structure, interacts (via the LIR motif) with ATG8 family proteins MAP1LC3A, MAP1LC3B, GABARAP and GABARAPL1. Interacts with VCP/p97; bridging VCP/p97 to covalent DNA-protein cross-links (DPCs). Interacts with TOP1 (when sumoylated).

It localises to the endoplasmic reticulum membrane. The protein resides in the cytoplasmic vesicle. Its subcellular location is the autophagosome. The protein localises to the cytoplasm. It is found in the cytosol. It localises to the nucleus. The protein resides in the chromosome. Its function is as follows. Major reticulophagy (also called ER-phagy) receptor that acts independently of other candidate reticulophagy receptors to remodel subdomains of the endoplasmic reticulum into autophagosomes upon nutrient stress, which then fuse with lysosomes for endoplasmic reticulum turnover. The ATG8-containing isolation membrane (IM) cradles a tubular segment of TEX264-positive ER near a three-way junction, allowing the formation of a synapse of 2 juxtaposed membranes with trans interaction between the TEX264 and ATG8 proteins. Expansion of the IM would extend the capture of ER, possibly through a 'zipper-like' process involving continued trans TEX264-ATG8 interactions, until poorly understood mechanisms lead to the fission of relevant membranes and, ultimately, autophagosomal membrane closure. Also involved in the repair of covalent DNA-protein cross-links (DPCs) during DNA synthesis: acts by bridging VCP/p97 to covalent DNA-protein cross-links (DPCs) and initiating resolution of DPCs by SPRTN. The polypeptide is Testis-expressed protein 264 (Homo sapiens (Human)).